Reading from the N-terminus, the 610-residue chain is Aspercryptin biosynthesis cluster-specific transcription regulator atnN (610 aa).

Residues 1–26 are compositionally biased toward polar residues; sequence MAPKDSQVSASNEMTGNPPSSVQGRS. Positions 1–27 are disordered; it reads MAPKDSQVSASNEMTGNPPSSVQGRSR. The segment at residues 30-57 is a DNA-binding region (zn(2)-C6 fungal-type); it reads CITCRIRRVKCDEERPHCRRCQSTGRKC. Disordered stretches follow at residues 61–81 and 427–493; these read TPLT…KAGS and AGST…LPRP. Low complexity-rich tracts occupy residues 66 to 79 and 437 to 474; these read QQPK…AAKA and SRAG…TPTP.

Its subcellular location is the nucleus. In terms of biological role, transcription factor that positively regulates the cluster that mediate the production of aspercryptins, linear lipopeptides built from six amino acids including 2 highly unusual and nonproteogenic amino acids, 2-amino-octanoic acid (2aoa) and 2-amino-dodecanol (2adol). The chain is Aspercryptin biosynthesis cluster-specific transcription regulator atnN from Emericella nidulans (strain FGSC A4 / ATCC 38163 / CBS 112.46 / NRRL 194 / M139) (Aspergillus nidulans).